We begin with the raw amino-acid sequence, 442 residues long: ATP-dependent RNA helicase SUB2 (442 aa).

Residues T59–Q87 carry the Q motif motif. The region spanning I90–I265 is the Helicase ATP-binding domain. A103–T110 provides a ligand contact to ATP. Residues D212–D215 carry the DECD box motif. A Helicase C-terminal domain is found at G277–T438.

It belongs to the DEAD box helicase family. DECD subfamily.

Its subcellular location is the nucleus. It catalyses the reaction ATP + H2O = ADP + phosphate + H(+). In terms of biological role, ATP-binding RNA helicase involved in transcription elongation and required for the export of mRNA out of the nucleus. SUB2 also plays a role in pre-mRNA splicing and spliceosome assembly. May be involved in rDNA and telomeric silencing, and maintenance of genome integrity. In Cryptococcus neoformans var. neoformans serotype D (strain JEC21 / ATCC MYA-565) (Filobasidiella neoformans), this protein is ATP-dependent RNA helicase SUB2 (SUB2).